Consider the following 157-residue polypeptide: Phosphopantetheine adenylyltransferase (157 aa).

A substrate-binding site is contributed by Ser8. ATP contacts are provided by residues 8 to 9 and His16; that span reads SF. Residues Lys40, Thr72, and Arg86 each coordinate substrate. Residues 87 to 89, Glu97, and 122 to 128 each bind ATP; these read GLR and HSFLSSS.

It belongs to the bacterial CoaD family. Homohexamer. Mg(2+) is required as a cofactor.

The protein resides in the cytoplasm. It carries out the reaction (R)-4'-phosphopantetheine + ATP + H(+) = 3'-dephospho-CoA + diphosphate. It participates in cofactor biosynthesis; coenzyme A biosynthesis; CoA from (R)-pantothenate: step 4/5. In terms of biological role, reversibly transfers an adenylyl group from ATP to 4'-phosphopantetheine, yielding dephospho-CoA (dPCoA) and pyrophosphate. The sequence is that of Phosphopantetheine adenylyltransferase from Prochlorococcus marinus (strain MIT 9303).